Reading from the N-terminus, the 767-residue chain is Ribonucleoside-diphosphate reductase subunit alpha (767 aa).

The disordered stretch occupies residues Met-1–Arg-30. The segment covering Pro-9 to His-26 has biased composition (polar residues). Positions Ile-31–Val-120 constitute an ATP-cone domain. Substrate is bound by residues Thr-228, Ser-243–Cys-244, Gly-272, Asn-460–Glu-464, and Pro-631–Ser-635. Cys-244 and Cys-478 form a disulfide bridge. The Proton acceptor role is filled by Asn-460. The Cysteine radical intermediate role is filled by Cys-462. The active-site Proton acceptor is Glu-464.

Belongs to the ribonucleoside diphosphate reductase large chain family. Tetramer of two alpha and two beta subunits.

It catalyses the reaction a 2'-deoxyribonucleoside 5'-diphosphate + [thioredoxin]-disulfide + H2O = a ribonucleoside 5'-diphosphate + [thioredoxin]-dithiol. Under complex allosteric control mediated by deoxynucleoside triphosphates and ATP binding. The type of nucleotide bound at the specificity site determines substrate preference. It seems probable that ATP makes the enzyme reduce CDP and UDP, dGTP favors ADP reduction and dTTP favors GDP reduction. Functionally, provides the precursors necessary for DNA synthesis. Catalyzes the biosynthesis of deoxyribonucleotides from the corresponding ribonucleotides. This is Ribonucleoside-diphosphate reductase subunit alpha (nrdA) from Synechocystis sp. (strain ATCC 27184 / PCC 6803 / Kazusa).